A 980-amino-acid chain; its full sequence is MPFSLRSTSFCFLACLCSYSYGLASSPQVLTPNVIIPFKGDDIYLNGDCVFASIYAGAEQGSIISANGQNLTIVGQNHTLSFTDSQGPALQNCAFISAEEKISLRDFSSLLFSKNVSCGEKGMISGKTVSISGGDSIVFKDNSVGYSSLPSVGQTPTTPIVGDVLKGSIFCVETGLEISGVKKELVFDNTAGNFGAVFCSRAAQGDTTFTVKDCKGKILFQDNVGSCGGGVIYKGEVLFQDNEGEMLFRGNSAHDDLGILDANPQPPTEVGGGGGVICTPEKTVTFKGNKGPITFDYNFAKGRGGAIQSQTFSLVADSAVVFSNNTAEKGGGAIYALEVNVSTNGGSILFEGNRASEGGAICVSEPIAANNGGLTLHAADGDIIFSKNMTSDRPGERSAIRILDSGTNVSLNASGASKMIFYDPVVQNNPATPPTGTSGEIKINESGSGSVVFTAETLTPSEKLNVINATSNFPGNLTVSSGELVVTKGATLTVGNITATSGRVTLGSGASLSAVAGTAGTCTVSKLGIDLESFLVPTYETAKLGADTTVAVNNNPTLDLVMANETEMYDNPLFMNAVTIPFVTLVSLQTTGGVTTSAVTLNNADTAHYGYQGSWSADWRRPPLAPDPSGMTPLDKSNTLYVTWRPSSNYGVYKLDPQRRGELVPNSLWVSGSALRTFTNGLKEHYVSRDVGFIASVQALGDYVLNYKQGNRDGFLARYGGFQAVAASHYENGGIFGVAFGQLYGQTKSRLYDSKDAGNITILSCFGRSYIDVKGTETVVYWETAYGYSVHRMHTQYFNGKTNKFDHSKCRWHNNSYYAFVGAEHNFLEYCIPTRQLARDYDLTGFMRFEMSGGWSSGAKETGALPRHFDRGTGHNMSLPIGVVAHAVSNGRRSPPSKLTINMGYRPDIWRVTPHCNMKIIANGVKTPIQGSPLARHAFFLEVHDTLYVRHLGRAYMNYSLDARHRQTTHFVSLGLNRIF.

Positions 1–24 (MPFSLRSTSFCFLACLCSYSYGLA) are cleaved as a signal peptide. Positions 661–980 (GELVPNSLWV…FVSLGLNRIF (320 aa)) constitute an Autotransporter domain.

It belongs to the PMP outer membrane protein family.

The protein localises to the secreted. It localises to the cell wall. Its subcellular location is the cell outer membrane. The sequence is that of Probable outer membrane protein PmpH (pmpH) from Chlamydia muridarum (strain MoPn / Nigg).